We begin with the raw amino-acid sequence, 235 residues long: uncharacterized protein (235 aa).

This is an uncharacterized protein from Escherichia coli (strain K12).